A 201-amino-acid polypeptide reads, in one-letter code: Imidazole glycerol phosphate synthase subunit HisH (201 aa).

The region spanning Met-1–Phe-201 is the Glutamine amidotransferase type-1 domain. Cys-79 acts as the Nucleophile in catalysis. Active-site residues include His-183 and Glu-185.

Heterodimer of HisH and HisF.

Its subcellular location is the cytoplasm. The catalysed reaction is 5-[(5-phospho-1-deoxy-D-ribulos-1-ylimino)methylamino]-1-(5-phospho-beta-D-ribosyl)imidazole-4-carboxamide + L-glutamine = D-erythro-1-(imidazol-4-yl)glycerol 3-phosphate + 5-amino-1-(5-phospho-beta-D-ribosyl)imidazole-4-carboxamide + L-glutamate + H(+). It catalyses the reaction L-glutamine + H2O = L-glutamate + NH4(+). The protein operates within amino-acid biosynthesis; L-histidine biosynthesis; L-histidine from 5-phospho-alpha-D-ribose 1-diphosphate: step 5/9. In terms of biological role, IGPS catalyzes the conversion of PRFAR and glutamine to IGP, AICAR and glutamate. The HisH subunit catalyzes the hydrolysis of glutamine to glutamate and ammonia as part of the synthesis of IGP and AICAR. The resulting ammonia molecule is channeled to the active site of HisF. The polypeptide is Imidazole glycerol phosphate synthase subunit HisH (Chlorobaculum tepidum (strain ATCC 49652 / DSM 12025 / NBRC 103806 / TLS) (Chlorobium tepidum)).